The following is a 292-amino-acid chain: MAASMAESCRASLYLARSVRMARPRLAAFASDACRVCTGPSRFQSTGPSEPGGFKPPPKPVIVDRRRVPEDERRFLSPEFIPPRGRTNPLKFKIERKDMLDRRKVLPIPEFYVGSILRVTTADPYASGKTSQFLGICIKRSGNGLGATFTLRNTIEGQGVEICFELYNPRIQEIQVVKLEKRLDDNLLYLRDALPEYSTFDVNMKPVPQEACQEVPVNKLKVKMKPKPWSKRWERPNFNIKGIRFDLALTEEQMKEAQKWNKPWIEFDMMREYDTSKIEAALWEEIEASKKS.

A disordered region spans residues 41–60; sequence SRFQSTGPSEPGGFKPPPKP. S77 carries the post-translational modification Phosphoserine.

It belongs to the bacterial ribosomal protein bL19 family. In terms of assembly, component of the mitochondrial ribosome large subunit (39S) which comprises a 16S rRNA and about 50 distinct proteins.

It is found in the mitochondrion. This Mus musculus (Mouse) protein is Large ribosomal subunit protein bL19m (Mrpl19).